A 190-amino-acid chain; its full sequence is Superoxide dismutase [Fe] (190 aa).

Residues His-27, His-75, Asp-156, and His-160 each contribute to the Fe cation site.

Belongs to the iron/manganese superoxide dismutase family. As to quaternary structure, homodimer. Fe cation is required as a cofactor.

The enzyme catalyses 2 superoxide + 2 H(+) = H2O2 + O2. Functionally, destroys superoxide anion radicals which are normally produced within the cells and which are toxic to biological systems. The polypeptide is Superoxide dismutase [Fe] (SODB) (Entamoeba histolytica (strain ATCC 30459 / HM-1:IMSS / ABRM)).